A 132-amino-acid polypeptide reads, in one-letter code: Phosphoribosyl-AMP cyclohydrolase (132 aa).

A Mg(2+)-binding site is contributed by aspartate 82. Residue cysteine 83 coordinates Zn(2+). The Mg(2+) site is built by aspartate 84 and aspartate 86. Residues cysteine 100 and cysteine 107 each contribute to the Zn(2+) site.

Belongs to the PRA-CH family. In terms of assembly, homodimer. It depends on Mg(2+) as a cofactor. Zn(2+) serves as cofactor.

It localises to the cytoplasm. It catalyses the reaction 1-(5-phospho-beta-D-ribosyl)-5'-AMP + H2O = 1-(5-phospho-beta-D-ribosyl)-5-[(5-phospho-beta-D-ribosylamino)methylideneamino]imidazole-4-carboxamide. The protein operates within amino-acid biosynthesis; L-histidine biosynthesis; L-histidine from 5-phospho-alpha-D-ribose 1-diphosphate: step 3/9. Catalyzes the hydrolysis of the adenine ring of phosphoribosyl-AMP. This is Phosphoribosyl-AMP cyclohydrolase from Dechloromonas aromatica (strain RCB).